The primary structure comprises 99 residues: Nucleoid-associated protein EbfC (99 aa).

This sequence belongs to the YbaB/EbfC family. As to quaternary structure, homodimer.

Its subcellular location is the cytoplasm. The protein localises to the nucleoid. In terms of biological role, binds to DNA and alters its conformation. May be involved in regulation of gene expression, nucleoid organization and DNA protection. The protein is Nucleoid-associated protein EbfC of Borreliella burgdorferi (strain ZS7) (Borrelia burgdorferi).